The sequence spans 334 residues: Formamidase (334 aa).

In terms of domain architecture, CN hydrolase spans phenylalanine 14–proline 260. The Proton acceptor role is filled by glutamate 60. Residue lysine 133 is the Proton donor of the active site. Catalysis depends on cysteine 166, which acts as the Nucleophile.

The protein belongs to the carbon-nitrogen hydrolase superfamily. Aliphatic amidase family.

It carries out the reaction formamide + H2O = formate + NH4(+). Functionally, is an aliphatic amidase with a restricted substrate specificity, as it only hydrolyzes formamide. The sequence is that of Formamidase from Helicobacter acinonychis (strain Sheeba).